The following is a 523-amino-acid chain: Alpha,alpha-trehalose-phosphate synthase [UDP-forming] (523 aa).

The D-glucose 6-phosphate site is built by Tyr98 and Asp152. Residues Arg288 and Lys293 each contribute to the UDP site. UDP-alpha-D-glucose contacts are provided by Arg288 and Lys293. Arg326 is a binding site for D-glucose 6-phosphate. Residue 387–395 coordinates UDP-alpha-D-glucose; it reads DGMNLVSYE. Residue 391-395 coordinates UDP; it reads LVSYE. Positions 503–523 are disordered; the sequence is QQFNLGEQREEGRLEPGEFDD. Basic and acidic residues predominate over residues 509–523; sequence EQREEGRLEPGEFDD.

The protein belongs to the glycosyltransferase 20 family.

The catalysed reaction is D-glucose 6-phosphate + UDP-alpha-D-glucose = alpha,alpha-trehalose 6-phosphate + UDP + H(+). Its pathway is carbohydrate biosynthesis. Functionally, synthase catalytic subunit of the trehalose synthase complex that catalyzes the production of trehalose from glucose-6-phosphate and UDP-alpha-D-glucose in a two step process. The disaccharide trehalose serves as a storage carbohydrate that is mobilized during conidial germination. Trehalose also serves as a protectant for cell integrity during stress. The polypeptide is Alpha,alpha-trehalose-phosphate synthase [UDP-forming] (Botryotinia fuckeliana (strain B05.10) (Noble rot fungus)).